Here is a 210-residue protein sequence, read N- to C-terminus: ATP-dependent Clp protease proteolytic subunit (210 aa).

Serine 106 acts as the Nucleophile in catalysis. The active site involves histidine 131.

It belongs to the peptidase S14 family. Fourteen ClpP subunits assemble into 2 heptameric rings which stack back to back to give a disk-like structure with a central cavity, resembling the structure of eukaryotic proteasomes.

Its subcellular location is the cytoplasm. The enzyme catalyses Hydrolysis of proteins to small peptides in the presence of ATP and magnesium. alpha-casein is the usual test substrate. In the absence of ATP, only oligopeptides shorter than five residues are hydrolyzed (such as succinyl-Leu-Tyr-|-NHMec, and Leu-Tyr-Leu-|-Tyr-Trp, in which cleavage of the -Tyr-|-Leu- and -Tyr-|-Trp bonds also occurs).. Cleaves peptides in various proteins in a process that requires ATP hydrolysis. Has a chymotrypsin-like activity. Plays a major role in the degradation of misfolded proteins. This chain is ATP-dependent Clp protease proteolytic subunit, found in Bartonella quintana (strain Toulouse) (Rochalimaea quintana).